The sequence spans 745 residues: Photosystem I P700 chlorophyll a apoprotein A2 (745 aa).

8 helical membrane passes run 49–72, 138–161, 178–202, 276–294, 338–361, 377–403, 425–447, and 528–546; these read LFAT…FHIA, LYAG…LHLQ, LNHH…HVAI, MAHH…GHMY, LHFQ…QHMY, AALY…IFLV, AIIS…LYVH, and FLVH…LILV. Residues Cys-570 and Cys-579 each contribute to the [4Fe-4S] cluster site. The next 2 helical transmembrane spans lie at 586–607 and 654–676; these read AFYL…YWHW and LAVW…MFLI. Residues His-665, Met-673, and Tyr-681 each coordinate chlorophyll a. Phylloquinone is bound at residue Trp-682. Residues 718–738 traverse the membrane as a helical segment; sequence LVGLAHFTVGYVLTYAAFVIA.

This sequence belongs to the PsaA/PsaB family. The PsaA/B heterodimer binds the P700 chlorophyll special pair and subsequent electron acceptors. PSI consists of a core antenna complex that captures photons, and an electron transfer chain that converts photonic excitation into a charge separation. The cyanobacterial PSI reaction center is composed of one copy each of PsaA,B,C,D,E,F,I,J,K,L,M and X, and forms trimeric complexes. It depends on PSI electron transfer chain: 5 chlorophyll a, 1 chlorophyll a', 2 phylloquinones and 3 4Fe-4S clusters. PSI core antenna: 90 chlorophyll a, 22 carotenoids, 3 phospholipids and 1 galactolipid. P700 is a chlorophyll a/chlorophyll a' dimer, A0 is one or more chlorophyll a, A1 is one or both phylloquinones and FX is a shared 4Fe-4S iron-sulfur center. as a cofactor.

Its subcellular location is the cellular thylakoid membrane. The catalysed reaction is reduced [plastocyanin] + hnu + oxidized [2Fe-2S]-[ferredoxin] = oxidized [plastocyanin] + reduced [2Fe-2S]-[ferredoxin]. PsaA and PsaB bind P700, the primary electron donor of photosystem I (PSI), as well as the electron acceptors A0, A1 and FX. PSI is a plastocyanin/cytochrome c6-ferredoxin oxidoreductase, converting photonic excitation into a charge separation, which transfers an electron from the donor P700 chlorophyll pair to the spectroscopically characterized acceptors A0, A1, FX, FA and FB in turn. Oxidized P700 is reduced on the lumenal side of the thylakoid membrane by plastocyanin or cytochrome c6. This Synechococcus sp. (strain JA-3-3Ab) (Cyanobacteria bacterium Yellowstone A-Prime) protein is Photosystem I P700 chlorophyll a apoprotein A2.